A 346-amino-acid polypeptide reads, in one-letter code: Phenylalanine--tRNA ligase alpha subunit (346 aa).

Residue E261 participates in Mg(2+) binding.

Belongs to the class-II aminoacyl-tRNA synthetase family. Phe-tRNA synthetase alpha subunit type 1 subfamily. Tetramer of two alpha and two beta subunits. The cofactor is Mg(2+).

It localises to the cytoplasm. It catalyses the reaction tRNA(Phe) + L-phenylalanine + ATP = L-phenylalanyl-tRNA(Phe) + AMP + diphosphate + H(+). This is Phenylalanine--tRNA ligase alpha subunit from Streptococcus agalactiae serotype Ia (strain ATCC 27591 / A909 / CDC SS700).